We begin with the raw amino-acid sequence, 359 residues long: 3-dehydroquinate synthase (359 aa).

NAD(+)-binding positions include 71-76, 105-109, 129-130, lysine 142, and lysine 151; these read DGEAYK, GVIGD, and TT. Residues glutamate 184, histidine 247, and histidine 264 each contribute to the Zn(2+) site.

Belongs to the sugar phosphate cyclases superfamily. Dehydroquinate synthase family. The cofactor is Co(2+). Zn(2+) serves as cofactor. NAD(+) is required as a cofactor.

It is found in the cytoplasm. It carries out the reaction 7-phospho-2-dehydro-3-deoxy-D-arabino-heptonate = 3-dehydroquinate + phosphate. It participates in metabolic intermediate biosynthesis; chorismate biosynthesis; chorismate from D-erythrose 4-phosphate and phosphoenolpyruvate: step 2/7. Catalyzes the conversion of 3-deoxy-D-arabino-heptulosonate 7-phosphate (DAHP) to dehydroquinate (DHQ). In Burkholderia mallei (strain NCTC 10247), this protein is 3-dehydroquinate synthase.